Reading from the N-terminus, the 90-residue chain is Secretory calcium-binding phosphoprotein proline-glutamine-rich 1 (90 aa).

A signal peptide spans 1 to 15; sequence MQLFLLAALLSAAAA.

As to expression, expressed in enamel organ.

It is found in the secreted. In terms of biological role, tooth-associated epithelia protein that may participate in structuring the basal lamina at cell-tooth interface. This chain is Secretory calcium-binding phosphoprotein proline-glutamine-rich 1, found in Mus musculus (Mouse).